Here is a 655-residue protein sequence, read N- to C-terminus: Probable alpha-galactosidase D (655 aa).

Residues Met-1–Gly-16 form the signal peptide. Asn-47 and Asn-91 each carry an N-linked (GlcNAc...) asparagine glycan. A disulfide bridge connects residues Cys-124 and Cys-155. Residue Asp-153 is the Nucleophile of the active site. Asn-180 and Asn-189 each carry an N-linked (GlcNAc...) asparagine glycan. Glu-198–Asp-202 lines the substrate pocket. The active-site Proton donor is the Asp-220. Residues Asn-349, Asn-436, Asn-458, Asn-503, Asn-537, Asn-541, and Asn-580 are each glycosylated (N-linked (GlcNAc...) asparagine).

This sequence belongs to the glycosyl hydrolase 27 family.

It is found in the secreted. The catalysed reaction is Hydrolysis of terminal, non-reducing alpha-D-galactose residues in alpha-D-galactosides, including galactose oligosaccharides, galactomannans and galactolipids.. In terms of biological role, hydrolyzes a variety of simple alpha-D-galactoside as well as more complex molecules such as oligosaccharides and polysaccharides. The polypeptide is Probable alpha-galactosidase D (aglD) (Aspergillus flavus (strain ATCC 200026 / FGSC A1120 / IAM 13836 / NRRL 3357 / JCM 12722 / SRRC 167)).